The following is a 366-amino-acid chain: Flagellar P-ring protein (366 aa).

A signal peptide spans 1 to 20 (MVIKFLSALILLLVTTAVQA).

The protein belongs to the FlgI family. As to quaternary structure, the basal body constitutes a major portion of the flagellar organelle and consists of four rings (L,P,S, and M) mounted on a central rod.

It localises to the periplasm. The protein resides in the bacterial flagellum basal body. In terms of biological role, assembles around the rod to form the L-ring and probably protects the motor/basal body from shearing forces during rotation. This is Flagellar P-ring protein from Escherichia coli O6:H1 (strain CFT073 / ATCC 700928 / UPEC).